Consider the following 158-residue polypeptide: Inorganic pyrophosphatase (158 aa).

Position 8 (glutamate 8) interacts with Mg(2+). 3 residues coordinate substrate: lysine 16, arginine 30, and tyrosine 42. The Mg(2+) site is built by aspartate 52, aspartate 57, aspartate 84, and aspartate 89. The Proton acceptor role is filled by aspartate 89. Tyrosine 125 is a substrate binding site.

It belongs to the PPase family. Homohexamer. Mg(2+) is required as a cofactor.

The protein localises to the cytoplasm. The enzyme catalyses diphosphate + H2O = 2 phosphate + H(+). Its function is as follows. Catalyzes the hydrolysis of inorganic pyrophosphate (PPi) forming two phosphate ions. The protein is Inorganic pyrophosphatase of Corynebacterium efficiens (strain DSM 44549 / YS-314 / AJ 12310 / JCM 11189 / NBRC 100395).